The following is a 240-amino-acid chain: Leucyl/phenylalanyl-tRNA--protein transferase (240 aa).

The protein belongs to the L/F-transferase family.

The protein resides in the cytoplasm. The catalysed reaction is N-terminal L-lysyl-[protein] + L-leucyl-tRNA(Leu) = N-terminal L-leucyl-L-lysyl-[protein] + tRNA(Leu) + H(+). It carries out the reaction N-terminal L-arginyl-[protein] + L-leucyl-tRNA(Leu) = N-terminal L-leucyl-L-arginyl-[protein] + tRNA(Leu) + H(+). The enzyme catalyses L-phenylalanyl-tRNA(Phe) + an N-terminal L-alpha-aminoacyl-[protein] = an N-terminal L-phenylalanyl-L-alpha-aminoacyl-[protein] + tRNA(Phe). Functions in the N-end rule pathway of protein degradation where it conjugates Leu, Phe and, less efficiently, Met from aminoacyl-tRNAs to the N-termini of proteins containing an N-terminal arginine or lysine. The sequence is that of Leucyl/phenylalanyl-tRNA--protein transferase from Maridesulfovibrio salexigens (strain ATCC 14822 / DSM 2638 / NCIMB 8403 / VKM B-1763) (Desulfovibrio salexigens).